Here is a 727-residue protein sequence, read N- to C-terminus: MNDQQPFSAITESPSAFSLTIRPDNIGVIGIDVPGEKVNTLKSEFAQQILSVFEQARQHATLRGLILISSKPDSFIAGADITMLNQCRSAEQAENLAKQGQETFEQIAALPFPVVAAIHGACLGGGLELALACDYRVCSLDEKTVLGLPEVQLGLLPGSGGTQRLPRLIGLDSALDLILTGRHLRANQALRQGLVDEAVPHDILLDTAVEMLKKGKRKAEPLGWRSRLLSSPGIRHVLFKMVKRKTRAKTHGNYPATEKIIQVVRRGVEKGREEGYRQEARAFGKLVMTPESAALRHLFFASNALKKTSGAASDAKPIHYVGILGGGLMGGGIASVTATRGQLPVRIKDINEQGINHALKYNWQLLTQRVQRKRMKPTERQRLMTLISGSTDYRGFEHADIVIEAVFEDLALKRQMVAEIEDHAAPHTIFASNTSSLPIHQIAEGARRPQQVIGLHYFSPVDKMPLVEVIPHAHTSAETVATTVALARKQGKTAIVVGDSAGFYVNRILAPYINEAAYCLLEGEPIESIDYALVRFGFPVGPFALLDEVGIDVATKIVPVLSEELGTRFTSPPAFDAILKDGRKGRKNGKGFYRYNKTRRFWQTGREVDSSIYPLLDVTAKAHIDPALISQRGVMMMLNEAARCLDEGVIQCARDGDIGAVFGIGFPPFLGGPFHYMDRLGMETVVKTLLVLQQQYGDRFAPCERLLAMREGQRTFYPPTDEDDSAS.

An enoyl-CoA hydratase region spans residues 1–200 (MNDQQPFSAI…RQGLVDEAVP (200 aa)). The 3-hydroxyacyl-CoA dehydrogenase stretch occupies residues 316–727 (KPIHYVGILG…PPTDEDDSAS (412 aa)).

This sequence in the N-terminal section; belongs to the enoyl-CoA hydratase/isomerase family. In the central section; belongs to the 3-hydroxyacyl-CoA dehydrogenase family. As to quaternary structure, heterotetramer of two alpha chains (FadJ) and two beta chains (FadI).

The protein resides in the cytoplasm. It catalyses the reaction a (3S)-3-hydroxyacyl-CoA = a (2E)-enoyl-CoA + H2O. It carries out the reaction a 4-saturated-(3S)-3-hydroxyacyl-CoA = a (3E)-enoyl-CoA + H2O. The catalysed reaction is a (3S)-3-hydroxyacyl-CoA + NAD(+) = a 3-oxoacyl-CoA + NADH + H(+). The enzyme catalyses (3S)-3-hydroxybutanoyl-CoA = (3R)-3-hydroxybutanoyl-CoA. The protein operates within lipid metabolism; fatty acid beta-oxidation. Catalyzes the formation of a hydroxyacyl-CoA by addition of water on enoyl-CoA. Also exhibits 3-hydroxyacyl-CoA epimerase and 3-hydroxyacyl-CoA dehydrogenase activities. The polypeptide is Fatty acid oxidation complex subunit alpha (Pectobacterium carotovorum subsp. carotovorum (strain PC1)).